We begin with the raw amino-acid sequence, 424 residues long: Ancylostoma secreted protein (424 aa).

The N-terminal stretch at 1–18 (MFSPVIVSVIFTIAFCDA) is a signal peptide. SCP domains follow at residues 41–177 (LDFH…SCIY) and 242–387 (LSVH…VCQY).

It belongs to the CRISP family.

The protein resides in the secreted. Functionally, associated with the transition to parasitism by infective hookworm larvae. This chain is Ancylostoma secreted protein (ASP), found in Ancylostoma caninum (Dog hookworm).